Here is a 1015-residue protein sequence, read N- to C-terminus: Probable beta-galactosidase B (1015 aa).

The N-terminal stretch at 1 to 21 (MAHIYRLLLLLLSNLWFSAAA) is a signal peptide. N-linked (GlcNAc...) asparagine glycosylation is present at Asn23. Tyr90 serves as a coordination point for substrate. An N-linked (GlcNAc...) asparagine glycan is attached at Asn100. Asn135, Ala136, and Glu137 together coordinate substrate. N-linked (GlcNAc...) asparagine glycosylation occurs at Asn172. Asn195 is a binding site for substrate. Glu196 acts as the Proton donor in catalysis. An N-linked (GlcNAc...) asparagine glycan is attached at Asn211. Tyr265 is a binding site for substrate. Cys271 and Cys324 are oxidised to a cystine. The active-site Nucleophile is Glu308. Tyr373 contributes to the substrate binding site. N-linked (GlcNAc...) asparagine glycosylation is found at Asn411, Asn441, Asn456, Asn554, Asn679, Asn735, Asn775, Asn821, and Asn878.

The protein belongs to the glycosyl hydrolase 35 family.

It localises to the secreted. It carries out the reaction Hydrolysis of terminal non-reducing beta-D-galactose residues in beta-D-galactosides.. Functionally, cleaves beta-linked terminal galactosyl residues from gangliosides, glycoproteins, and glycosaminoglycans. This Neosartorya fischeri (strain ATCC 1020 / DSM 3700 / CBS 544.65 / FGSC A1164 / JCM 1740 / NRRL 181 / WB 181) (Aspergillus fischerianus) protein is Probable beta-galactosidase B (lacB).